The following is a 342-amino-acid chain: Isopentenyl-diphosphate delta-isomerase (342 aa).

11–12 (RK) serves as a coordination point for substrate. FMN is bound by residues Ser68, 69–71 (SMT), Ser99, and Asn128. 99–101 (SQR) provides a ligand contact to substrate. Gln162 contributes to the substrate binding site. Glu163 contacts Mg(2+). Residues Lys194, Ser219, Thr224, 275–277 (GVR), and 296–297 (AK) contribute to the FMN site.

Belongs to the IPP isomerase type 2 family. In terms of assembly, homooctamer. Dimer of tetramers. FMN serves as cofactor. NADPH is required as a cofactor. It depends on Mg(2+) as a cofactor.

The protein resides in the cytoplasm. It carries out the reaction isopentenyl diphosphate = dimethylallyl diphosphate. Its function is as follows. Involved in the biosynthesis of isoprenoids. Catalyzes the 1,3-allylic rearrangement of the homoallylic substrate isopentenyl (IPP) to its allylic isomer, dimethylallyl diphosphate (DMAPP). The chain is Isopentenyl-diphosphate delta-isomerase from Legionella pneumophila subsp. pneumophila (strain Philadelphia 1 / ATCC 33152 / DSM 7513).